We begin with the raw amino-acid sequence, 257 residues long: NAD-capped RNA hydrolase NudC (257 aa).

Substrate is bound at residue Arg-69. Positions 98 and 101 each coordinate Zn(2+). Glu-111 contacts substrate. The Zn(2+) site is built by Cys-116 and Cys-119. Tyr-124 provides a ligand contact to substrate. One can recognise a Nudix hydrolase domain in the interval 125-248; it reads PQIAPCIIVA…TVARRLIEDT (124 aa). Positions 158, 174, and 178 each coordinate a divalent metal cation. Positions 159 to 180 match the Nudix box motif; it reads GFVEVGETLEQAVAREVMEESG. Position 192-199 (192-199) interacts with substrate; the sequence is QPWPFPQS. Glu-219 contributes to the a divalent metal cation binding site. Ala-241 contributes to the substrate binding site.

Belongs to the Nudix hydrolase family. NudC subfamily. As to quaternary structure, homodimer. It depends on Mg(2+) as a cofactor. Mn(2+) is required as a cofactor. Requires Zn(2+) as cofactor.

It carries out the reaction a 5'-end NAD(+)-phospho-ribonucleoside in mRNA + H2O = a 5'-end phospho-adenosine-phospho-ribonucleoside in mRNA + beta-nicotinamide D-ribonucleotide + 2 H(+). The enzyme catalyses NAD(+) + H2O = beta-nicotinamide D-ribonucleotide + AMP + 2 H(+). The catalysed reaction is NADH + H2O = reduced beta-nicotinamide D-ribonucleotide + AMP + 2 H(+). MRNA decapping enzyme that specifically removes the nicotinamide adenine dinucleotide (NAD) cap from a subset of mRNAs by hydrolyzing the diphosphate linkage to produce nicotinamide mononucleotide (NMN) and 5' monophosphate mRNA. The NAD-cap is present at the 5'-end of some mRNAs and stabilizes RNA against 5'-processing. Has preference for mRNAs with a 5'-end purine. Catalyzes the hydrolysis of a broad range of dinucleotide pyrophosphates. The chain is NAD-capped RNA hydrolase NudC from Salmonella agona (strain SL483).